Consider the following 483-residue polypeptide: Dual specificity protein kinase CLK1 (483 aa).

The interval 1-49 (MRHSKRTYCPDWDERDWDYGTWRSSSSHKRKKRSHSSAREQKRCRYDHS) is disordered. The segment covering 26–36 (SSHKRKKRSHS) has biased composition (basic residues). The Nuclear localization signal signature appears at 29 to 33 (KRKKR). A compositionally biased stretch (basic and acidic residues) spans 37-49 (SAREQKRCRYDHS). At serine 61 the chain carries Phosphoserine. Over residues 84–111 (EPGHPYGEPGSRYQMHSSKSSGRSGRSS) the composition is skewed to low complexity. The segment at 84–146 (EPGHPYGEPG…SRSVEDDEEG (63 aa)) is disordered. The segment covering 112–137 (YKSKHRSRHHTSQHHSHGKSHRRKRS) has biased composition (basic residues). Serine 139 carries the phosphoserine modification. A Protein kinase domain is found at 160–476 (YEIVDTLGEG…LKEALKHPFF (317 aa)). Residues 166-174 (LGEGAFGKV) and lysine 190 contribute to the ATP site. Aspartate 287 (proton acceptor) is an active-site residue.

It belongs to the protein kinase superfamily. CMGC Ser/Thr protein kinase family. Lammer subfamily. Interacts with PPIG and UBL5. In terms of processing, autophosphorylates on all three types of residues.

The protein localises to the nucleus. The enzyme catalyses L-seryl-[protein] + ATP = O-phospho-L-seryl-[protein] + ADP + H(+). It catalyses the reaction L-threonyl-[protein] + ATP = O-phospho-L-threonyl-[protein] + ADP + H(+). The catalysed reaction is L-tyrosyl-[protein] + ATP = O-phospho-L-tyrosyl-[protein] + ADP + H(+). Regulates splicing of its own pre-mRNA according to its kinase activity; increased expression of the catalytically active form influences splicing to generate the catalytically inactive splicing variant lacking the kinase domain. Leucettine L41 inhibits its kinase activity and affects the regulation of alternative splicing mediated by phosphorylation of SR proteins. In terms of biological role, dual specificity kinase acting on both serine/threonine and tyrosine-containing substrates. Phosphorylates serine- and arginine-rich (SR) proteins of the spliceosomal complex and may be a constituent of a network of regulatory mechanisms that enable SR proteins to control RNA splicing. Phosphorylates: SRSF1, SRSF3 and PTPN1. Regulates the alternative splicing of tissue factor (F3) pre-mRNA in endothelial cells. The chain is Dual specificity protein kinase CLK1 from Mus musculus (Mouse).